We begin with the raw amino-acid sequence, 419 residues long: Dynein regulatory complex protein 9 (419 aa).

Disordered regions lie at residues 1–47 (MEGE…SPEV) and 393–419 (SFKM…RGKK). Acidic residues predominate over residues 34–44 (EELEEEEEETS). The IQ domain occupies 371–400 (ELRSIVKLQAWWRGTVVRREIGSFKMPKKE).

This sequence belongs to the DRC9 family. In terms of assembly, component of the nexin-dynein regulatory complex (N-DRC). Interacts (via IQ domain) with CALM when calcium levels are low. Does not interact with CALM in the presence of Ca(2+). Interacts with the HSP70 proteins HSPA1L and HSPA8. May form a complex with CAMK4 and HSP70.

The protein localises to the cytoplasm. Its subcellular location is the cell projection. The protein resides in the cilium. It is found in the flagellum. It localises to the cytoskeleton. The protein localises to the flagellum axoneme. In terms of biological role, component of the nexin-dynein regulatory complex (N-DRC), a key regulator of ciliary/flagellar motility which maintains the alignment and integrity of the distal axoneme and regulates microtubule sliding in motile axonemes. Binds calmodulin when cellular Ca(2+) levels are low and thereby contributes to the regulation of calcium and calmodulin-dependent protein kinase IV (CAMK4) activity; contributes to the regulation of CAMK4 signaling cascades. Required for normal axoneme assembly in sperm flagella, normal sperm tail formation and for male fertility. The protein is Dynein regulatory complex protein 9 (Iqcg) of Rattus norvegicus (Rat).